A 193-amino-acid chain; its full sequence is MRWLPFSALLLWALCLHSASADNNGVKKMKMQFATGPLLKFQICVSUGYKRVFEEYTQALYQRYPDIRIEGENYLPLPLYRHIASFLSMFKLLLIGVIILGKDPFALCGMQAPGIWVWSQENKIYACMMVFFFSNMIENQCMSTGAFEITLNDVPVWSKLESGHLPSMQQLVQILENEMKMSMHMDTLPPHQS.

The N-terminal stretch at 1–21 (MRWLPFSALLLWALCLHSASA) is a signal peptide. Residues 44-47 (CVSU) constitute a cross-link (cysteinyl-selenocysteine (Cys-Sec)). Residue Sec47 is a non-standard amino acid, selenocysteine. Residues 83–101 (IASFLSMFKLLLIGVIILG) traverse the membrane as a helical segment.

This sequence belongs to the SelWTH family. Selenoprotein T subfamily. Post-translationally, may contain a selenide-sulfide bond between Cys-44 and Sec-47. This bond is speculated to serve as redox-active pair. As to expression, expressed in embryonic olfactory vesicles and the photoreceptor cell layer of the embryonic retina. Low level in embryonic epiphysis.

Its subcellular location is the endoplasmic reticulum membrane. The catalysed reaction is [thioredoxin]-dithiol + NADP(+) = [thioredoxin]-disulfide + NADPH + H(+). In terms of biological role, selenoprotein with thioredoxin reductase-like oxidoreductase activity. The sequence is that of Thioredoxin reductase-like selenoprotein T1a from Danio rerio (Zebrafish).